A 262-amino-acid polypeptide reads, in one-letter code: 4-hydroxy-tetrahydrodipicolinate reductase (262 aa).

9–14 serves as a coordination point for NAD(+); that stretch reads GCLGRM. Arginine 36 lines the NADP(+) pocket. NAD(+) contacts are provided by residues 100 to 102 and 121 to 124; these read GTT and SANM. The Proton donor/acceptor role is filled by histidine 154. Position 155 (histidine 155) interacts with (S)-2,3,4,5-tetrahydrodipicolinate. The active-site Proton donor is the lysine 158. 164-165 provides a ligand contact to (S)-2,3,4,5-tetrahydrodipicolinate; sequence GT.

Belongs to the DapB family.

The protein resides in the cytoplasm. It carries out the reaction (S)-2,3,4,5-tetrahydrodipicolinate + NAD(+) + H2O = (2S,4S)-4-hydroxy-2,3,4,5-tetrahydrodipicolinate + NADH + H(+). It catalyses the reaction (S)-2,3,4,5-tetrahydrodipicolinate + NADP(+) + H2O = (2S,4S)-4-hydroxy-2,3,4,5-tetrahydrodipicolinate + NADPH + H(+). It participates in amino-acid biosynthesis; L-lysine biosynthesis via DAP pathway; (S)-tetrahydrodipicolinate from L-aspartate: step 4/4. Catalyzes the conversion of 4-hydroxy-tetrahydrodipicolinate (HTPA) to tetrahydrodipicolinate. The protein is 4-hydroxy-tetrahydrodipicolinate reductase of Wolbachia pipientis subsp. Culex pipiens (strain wPip).